Here is a 768-residue protein sequence, read N- to C-terminus: Ribonucleoside-diphosphate reductase large chain (768 aa).

ATP is bound by residues 7–8 (SK) and 13–19 (EKLGIDL). 2 residues coordinate GDP: T196 and S211. A disulfide bridge connects residues C212 and C437. DTTP-binding positions include 220–222 (DSI), K237, and R250. Residue N420 coordinates GDP. N420 acts as the Proton acceptor in catalysis. C422 functions as the Cysteine radical intermediate in the catalytic mechanism. E424 serves as a coordination point for GDP. Residue E424 is the Proton acceptor of the active site.

The protein belongs to the ribonucleoside diphosphate reductase large chain family. Heterodimer of a large and a small subunit.

It carries out the reaction a 2'-deoxyribonucleoside 5'-diphosphate + [thioredoxin]-disulfide + H2O = a ribonucleoside 5'-diphosphate + [thioredoxin]-dithiol. Its activity is regulated as follows. Under complex allosteric control mediated by deoxynucleoside triphosphates and ATP binding to separate specificity and activation sites on the large subunit. The type of nucleotide bound at the specificity site determines substrate preference. It seems probable that ATP makes the enzyme reduce CDP and UDP, dGTP favors ADP reduction and dTTP favors GDP reduction. Stimulated by ATP and inhibited by dATP binding to the activity site. Functionally, provides the precursors necessary for DNA synthesis. Catalyzes the biosynthesis of deoxyribonucleotides from the corresponding ribonucleotides. The polypeptide is Ribonucleoside-diphosphate reductase large chain (Encephalitozoon cuniculi (strain GB-M1) (Microsporidian parasite)).